We begin with the raw amino-acid sequence, 428 residues long: GTPase HflX (428 aa).

The Hflx-type G domain occupies 214 to 374 (PVVAIVGYTN…AIERELFKET (161 aa)). Residues 220-227 (GYTNAGKS), 245-249 (FATLD), 267-270 (DTVG), 333-336 (NKID), and 352-354 (SAK) each bind GTP. The Mg(2+) site is built by S227 and T247.

The protein belongs to the TRAFAC class OBG-HflX-like GTPase superfamily. HflX GTPase family. As to quaternary structure, monomer. Associates with the 50S ribosomal subunit. The cofactor is Mg(2+).

The protein localises to the cytoplasm. Functionally, GTPase that associates with the 50S ribosomal subunit and may have a role during protein synthesis or ribosome biogenesis. The protein is GTPase HflX of Caldanaerobacter subterraneus subsp. tengcongensis (strain DSM 15242 / JCM 11007 / NBRC 100824 / MB4) (Thermoanaerobacter tengcongensis).